The following is a 208-amino-acid chain: Glutathione S-transferase (208 aa).

The GST N-terminal domain maps to 1–78; it reads MSYKLTYFPI…HLARKFNLNG (78 aa). Residues Y7, K42, 49 to 50, and 62 to 63 each bind glutathione; these read QL and QS. The region spanning 80–200 is the GST C-terminal domain; sequence NNAETSYVDM…YCAKRNASKM (121 aa).

The protein belongs to the GST superfamily. Pi family. Homodimer.

It carries out the reaction RX + glutathione = an S-substituted glutathione + a halide anion + H(+). Its function is as follows. Conjugation of reduced glutathione to a wide number of exogenous and endogenous hydrophobic electrophiles. The chain is Glutathione S-transferase from Dirofilaria immitis (Canine heartworm).